Here is a 439-residue protein sequence, read N- to C-terminus: ATP-dependent protease ATPase subunit HslU (439 aa).

ATP contacts are provided by residues Ile17, 59–64 (GVGKTE), Asp251, Glu317, and Arg389.

The protein belongs to the ClpX chaperone family. HslU subfamily. As to quaternary structure, a double ring-shaped homohexamer of HslV is capped on each side by a ring-shaped HslU homohexamer. The assembly of the HslU/HslV complex is dependent on binding of ATP.

It localises to the cytoplasm. In terms of biological role, ATPase subunit of a proteasome-like degradation complex; this subunit has chaperone activity. The binding of ATP and its subsequent hydrolysis by HslU are essential for unfolding of protein substrates subsequently hydrolyzed by HslV. HslU recognizes the N-terminal part of its protein substrates and unfolds these before they are guided to HslV for hydrolysis. This chain is ATP-dependent protease ATPase subunit HslU, found in Campylobacter jejuni (strain RM1221).